The primary structure comprises 200 residues: Snake venom metalloproteinase BmooMP-I (200 aa).

The Peptidase M12B domain occupies 5–200 (RYIELAVVAD…HNPQCILNEP (196 aa)). Ca(2+) is bound by residues E8 and D92. 3 disulfide bridges follow: C116–C195, C155–C179, and C157–C162. H141 provides a ligand contact to Zn(2+). E142 is a catalytic residue. The Zn(2+) site is built by H145 and H151. The Ca(2+) site is built by C195 and N198.

Belongs to the venom metalloproteinase (M12B) family. P-I subfamily. Monomer. Zn(2+) is required as a cofactor. Expressed by the venom gland.

It is found in the secreted. In terms of biological role, zinc metalloprotease that displays fibrinogenolytic, gelatinase and weak hemorrhagic activities. Degrades the three chain of fibrinogen Aalpha-chain (FGA), Bbeta-chain (FGB), and gamma (FGG). This Bothrops moojeni (Lance-headed viper) protein is Snake venom metalloproteinase BmooMP-I.